The sequence spans 210 residues: MKKRIQKTILTVLFSSLSSIAFADMQSIAELQRRLEHVAQYSADFEQTVRSSKGQQIQSGRGKFQVKRPNLFRMDINAPQENVIVSDGENLWFYDPFVAQVTVNSVQNAVNGTPFVLLTSSDKQHWTQYEVTQNADTFVLKPKSAKNNLRQFDVQIDQNGLLKGFSTIERDGQTNLYRLRNITTADLSADLFKFSVPKDVEVDDQRRVKK.

An N-terminal signal peptide occupies residues 1 to 23 (MKKRIQKTILTVLFSSLSSIAFA).

Belongs to the LolA family. In terms of assembly, monomer.

It is found in the periplasm. Its function is as follows. Participates in the translocation of lipoproteins from the inner membrane to the outer membrane. Only forms a complex with a lipoprotein if the residue after the N-terminal Cys is not an aspartate (The Asp acts as a targeting signal to indicate that the lipoprotein should stay in the inner membrane). This is Outer-membrane lipoprotein carrier protein from Haemophilus ducreyi (strain 35000HP / ATCC 700724).